Reading from the N-terminus, the 492-residue chain is Catalase isozyme 2 (492 aa).

Catalysis depends on residues histidine 65 and asparagine 138. Position 347 (tyrosine 347) interacts with heme.

This sequence belongs to the catalase family. As to quaternary structure, homotetramer. Heme is required as a cofactor. In terms of tissue distribution, high levels in green cotyledons, mature leaf, stem and green hypocotyl.

It is found in the peroxisome. It catalyses the reaction 2 H2O2 = O2 + 2 H2O. In terms of biological role, occurs in almost all aerobically respiring organisms and serves to protect cells from the toxic effects of hydrogen peroxide. The protein is Catalase isozyme 2 (CAT2) of Cucurbita pepo (Vegetable marrow).